A 395-amino-acid polypeptide reads, in one-letter code: Elongation factor Tu (395 aa).

Residues lysine 10 to arginine 205 enclose the tr-type G domain. The G1 stretch occupies residues glycine 19 to threonine 26. Residue glycine 19–threonine 26 participates in GTP binding. Threonine 26 is a Mg(2+) binding site. The interval glycine 60–asparagine 64 is G2. Positions aspartate 81–glycine 84 are G3. GTP contacts are provided by residues aspartate 81–histidine 85 and asparagine 136–aspartate 139. Positions asparagine 136–aspartate 139 are G4. A G5 region spans residues serine 174–leucine 176.

The protein belongs to the TRAFAC class translation factor GTPase superfamily. Classic translation factor GTPase family. EF-Tu/EF-1A subfamily. As to quaternary structure, monomer.

Its subcellular location is the cytoplasm. It carries out the reaction GTP + H2O = GDP + phosphate + H(+). Functionally, GTP hydrolase that promotes the GTP-dependent binding of aminoacyl-tRNA to the A-site of ribosomes during protein biosynthesis. The polypeptide is Elongation factor Tu (Hymenobacter ocellatus (Parahymenobacter ocellatus)).